The following is a 95-amino-acid chain: Translation initiation factor IF-1 (95 aa).

The region spanning methionine 1–lysine 72 is the S1-like domain. Residues arginine 70–arginine 95 form a disordered region. Over residues arginine 86–arginine 95 the composition is skewed to pro residues.

It belongs to the IF-1 family. In terms of assembly, component of the 30S ribosomal translation pre-initiation complex which assembles on the 30S ribosome in the order IF-2 and IF-3, IF-1 and N-formylmethionyl-tRNA(fMet); mRNA recruitment can occur at any time during PIC assembly.

It is found in the cytoplasm. Functionally, one of the essential components for the initiation of protein synthesis. Stabilizes the binding of IF-2 and IF-3 on the 30S subunit to which N-formylmethionyl-tRNA(fMet) subsequently binds. Helps modulate mRNA selection, yielding the 30S pre-initiation complex (PIC). Upon addition of the 50S ribosomal subunit IF-1, IF-2 and IF-3 are released leaving the mature 70S translation initiation complex. In Rhodospirillum rubrum (strain ATCC 11170 / ATH 1.1.1 / DSM 467 / LMG 4362 / NCIMB 8255 / S1), this protein is Translation initiation factor IF-1.